A 351-amino-acid chain; its full sequence is Putative F-box protein At5g52610 (351 aa).

In terms of domain architecture, F-box spans 1 to 41 (MISEDLLVEILLRLPVKPLARCLCVCKLWATIIRSRYFINL).

The sequence is that of Putative F-box protein At5g52610 from Arabidopsis thaliana (Mouse-ear cress).